Here is a 302-residue protein sequence, read N- to C-terminus: Putative glycine N-acyltransferase-like protein 1B (302 aa).

Belongs to the glycine N-acyltransferase family.

The enzyme catalyses an acyl-CoA + L-glutamine = an N(2)-acyl-L-glutamine + CoA + H(+). In terms of biological role, putative acyltransferase which transfers an acyl group to the N-terminus of glutamine. Can use phenylacetyl-CoA as an acyl donor. The sequence is that of Putative glycine N-acyltransferase-like protein 1B from Homo sapiens (Human).